The primary structure comprises 371 residues: ATP-dependent protease ATP-binding subunit-like protein AmiB (371 aa).

Residue 96–103 participates in ATP binding; it reads GPTGVGKT.

This sequence belongs to the ClpX chaperone family. It depends on Mg(2+) as a cofactor.

Functionally, unlikely to encode a regulatory protein. Has ATPase activity. AmiB and AmiS may act jointly into a two component ABC transporter system. The protein is ATP-dependent protease ATP-binding subunit-like protein AmiB (amiB) of Pseudomonas aeruginosa (strain ATCC 15692 / DSM 22644 / CIP 104116 / JCM 14847 / LMG 12228 / 1C / PRS 101 / PAO1).